The chain runs to 92 residues: Progonadoliberin-1 (92 aa).

The N-terminal stretch at 1–23 (MELVPKFLAGLILLTLCVGGCYA) is a signal peptide. The residue at position 24 (Gln24) is a Pyrrolidone carboxylic acid. Gly33 is modified (glycine amide).

The protein belongs to the GnRH family.

The protein resides in the secreted. Stimulates the secretion of gonadotropins; it stimulates the secretion of both luteinizing and follicle-stimulating hormones. The chain is Progonadoliberin-1 (GNRH1) from Tupaia belangeri (Common tree shrew).